We begin with the raw amino-acid sequence, 493 residues long: Dipeptide and tripeptide permease B (493 aa).

Over 1 to 27 (MERSTPTGLLQQPKPFFMIFFVELWER) the chain is Cytoplasmic. The helical transmembrane segment at 28-48 (FGYYGVQGILAVFFVQQLGFS) threads the bilayer. Residues 49 to 52 (QEQA) are Periplasmic-facing. The chain crosses the membrane as a helical span at residues 53–73 (FVTFGAFAALVYGLISIGGYV). Topologically, residues 74-82 (GDHLLGTKR) are cytoplasmic. A helical transmembrane segment spans residues 83–103 (TMVLGAVVLAAGYFATGLSLY). The Periplasmic segment spans residues 104–106 (QPN). Residues 107–127 (LIFFALGTIAVGNGLFKANPA) form a helical membrane-spanning segment. The Cytoplasmic portion of the chain corresponds to 128–146 (SLLSKCYPPKDPRLDGAFT). A helical transmembrane segment spans residues 147–167 (LFYMSINIGSLLSLSLAPVIA). At 168–169 (ER) the chain is on the periplasmic side. A helical transmembrane segment spans residues 170 to 190 (FGYTVTYYLCGIGLIFALLVY). Topologically, residues 191 to 212 (FCCRHMVRHIGSEPDTKPLNWR) are cytoplasmic. The next 2 helical transmembrane spans lie at 213–233 (NLLL…WLMN) and 234–254 (HVFI…FIFF). Residues 255 to 267 (REASKQDRLGRNK) lie on the Cytoplasmic side of the membrane. A helical membrane pass occupies residues 268-288 (MFVAFILMIEAIVFYVLYAQM). The Periplasmic segment spans residues 289-311 (PTSLNFFAINNVHHEILGFSINP). Residues 312-332 (VSFQALNPFWVVVASPILASI) form a helical membrane-spanning segment. Residues 333 to 350 (YTRLGSQNRDLSMPAKFT) lie on the Cytoplasmic side of the membrane. Residues 351–371 (LGMFLCSLGFLTAAAAGMWFA) traverse the membrane as a helical segment. Topologically, residues 372-379 (DAQGLTSP) are periplasmic. A helical transmembrane segment spans residues 380–400 (WFIVLVYLFQSLGELMISALG). Residues 401-424 (LAMVAALVPQYLMGFILGMWFLTQ) are Cytoplasmic-facing. The chain crosses the membrane as a helical span at residues 425-445 (AASFLIGGYVATFTATPEGMT). Over 446–456 (DPLETLPIYTD) the chain is Periplasmic. A helical transmembrane segment spans residues 457 to 477 (VFGKIGMVTLVIALVMALLIP). The Cytoplasmic portion of the chain corresponds to 478 to 493 (WLNRMINSSAAEDAVA).

Belongs to the major facilitator superfamily. Proton-dependent oligopeptide transporter (POT/PTR) (TC 2.A.17) family. DtpB subfamily.

Its subcellular location is the cell inner membrane. Functionally, proton-dependent permease that transports di- and tripeptides. The polypeptide is Dipeptide and tripeptide permease B (Yersinia enterocolitica serotype O:8 / biotype 1B (strain NCTC 13174 / 8081)).